The primary structure comprises 594 residues: UvrABC system protein C (594 aa).

A GIY-YIG domain is found at N13–I99. Positions D205–I240 constitute a UVR domain.

Belongs to the UvrC family. Interacts with UvrB in an incision complex.

Its subcellular location is the cytoplasm. Functionally, the UvrABC repair system catalyzes the recognition and processing of DNA lesions. UvrC both incises the 5' and 3' sides of the lesion. The N-terminal half is responsible for the 3' incision and the C-terminal half is responsible for the 5' incision. This chain is UvrABC system protein C, found in Helicobacter acinonychis (strain Sheeba).